The sequence spans 200 residues: MYEYIKGTLTHIDGSYVVIESFGIGYAIMLSERFLVDLRAFMHQEVLIYVHSVIRETEHVLYGFSSRAERECFRLLISFSGIGPKTGLSILNMFPLQELCSIARLENVKAIASVPGIGKKTAEKLMVDLKQKLPTLMPLYLEEPVVPSSTANSSFKEGIGALMNLGFSRLAADRMMTEAVKELSEEASVAELLPIALRKS.

Positions 1-65 (MYEYIKGTLT…ETEHVLYGFS (65 aa)) are domain I. The segment at 66–144 (SRAERECFRL…TLMPLYLEEP (79 aa)) is domain II. Positions 145 to 149 (VVPSS) are flexible linker. A domain III region spans residues 150–200 (TANSSFKEGIGALMNLGFSRLAADRMMTEAVKELSEEASVAELLPIALRKS).

This sequence belongs to the RuvA family. As to quaternary structure, homotetramer. Forms an RuvA(8)-RuvB(12)-Holliday junction (HJ) complex. HJ DNA is sandwiched between 2 RuvA tetramers; dsDNA enters through RuvA and exits via RuvB. An RuvB hexamer assembles on each DNA strand where it exits the tetramer. Each RuvB hexamer is contacted by two RuvA subunits (via domain III) on 2 adjacent RuvB subunits; this complex drives branch migration. In the full resolvosome a probable DNA-RuvA(4)-RuvB(12)-RuvC(2) complex forms which resolves the HJ.

Its subcellular location is the cytoplasm. The RuvA-RuvB-RuvC complex processes Holliday junction (HJ) DNA during genetic recombination and DNA repair, while the RuvA-RuvB complex plays an important role in the rescue of blocked DNA replication forks via replication fork reversal (RFR). RuvA specifically binds to HJ cruciform DNA, conferring on it an open structure. The RuvB hexamer acts as an ATP-dependent pump, pulling dsDNA into and through the RuvAB complex. HJ branch migration allows RuvC to scan DNA until it finds its consensus sequence, where it cleaves and resolves the cruciform DNA. The sequence is that of Holliday junction branch migration complex subunit RuvA from Chlamydia trachomatis serovar L2 (strain ATCC VR-902B / DSM 19102 / 434/Bu).